Here is an 88-residue protein sequence, read N- to C-terminus: Small ribosomal subunit protein uS15c (88 aa).

The protein belongs to the universal ribosomal protein uS15 family. Part of the 30S ribosomal subunit.

The protein resides in the plastid. The protein localises to the chloroplast. This chain is Small ribosomal subunit protein uS15c (rps15), found in Barbarea verna (Land cress).